The following is a 153-amino-acid chain: Ubiquitin/ISG15-conjugating enzyme E2 L6 (153 aa).

The UBC core domain maps to methionine 2–valine 149. Residue cysteine 86 is the Glycyl thioester intermediate of the active site.

The protein belongs to the ubiquitin-conjugating enzyme family. As to quaternary structure, interacts with RNF19A, RNF19B and RNF144B. Interacts with FLT3 (tyrosine phosphorylated). Post-translationally, ISGylated. Present in natural killer cells (at protein level).

The enzyme catalyses S-ubiquitinyl-[E1 ubiquitin-activating enzyme]-L-cysteine + [E2 ubiquitin-conjugating enzyme]-L-cysteine = [E1 ubiquitin-activating enzyme]-L-cysteine + S-ubiquitinyl-[E2 ubiquitin-conjugating enzyme]-L-cysteine.. It functions in the pathway protein modification; protein ubiquitination. In terms of biological role, catalyzes the covalent attachment of ubiquitin or ISG15 to other proteins. Functions in the E6/E6-AP-induced ubiquitination of p53/TP53. Promotes ubiquitination and subsequent proteasomal degradation of FLT3. The sequence is that of Ubiquitin/ISG15-conjugating enzyme E2 L6 (UBE2L6) from Homo sapiens (Human).